Here is a 208-residue protein sequence, read N- to C-terminus: Ribosomal RNA large subunit methyltransferase E (208 aa).

Gly-63, Trp-65, Asp-83, Asp-99, and Asp-124 together coordinate S-adenosyl-L-methionine. Lys-164 acts as the Proton acceptor in catalysis.

The protein belongs to the class I-like SAM-binding methyltransferase superfamily. RNA methyltransferase RlmE family.

It is found in the cytoplasm. The enzyme catalyses uridine(2552) in 23S rRNA + S-adenosyl-L-methionine = 2'-O-methyluridine(2552) in 23S rRNA + S-adenosyl-L-homocysteine + H(+). Its function is as follows. Specifically methylates the uridine in position 2552 of 23S rRNA at the 2'-O position of the ribose in the fully assembled 50S ribosomal subunit. This Salmonella typhi protein is Ribosomal RNA large subunit methyltransferase E.